Consider the following 510-residue polypeptide: 2,3-bisphosphoglycerate-independent phosphoglycerate mutase (510 aa).

Residues D14 and S64 each coordinate Mn(2+). The Phosphoserine intermediate role is filled by S64. Substrate-binding positions include H125, 155 to 156 (RD), R187, R193, 259 to 262 (RADR), and K332. The Mn(2+) site is built by D399, H403, D440, H441, and H459.

It belongs to the BPG-independent phosphoglycerate mutase family. In terms of assembly, monomer. It depends on Mn(2+) as a cofactor.

It catalyses the reaction (2R)-2-phosphoglycerate = (2R)-3-phosphoglycerate. It participates in carbohydrate degradation; glycolysis; pyruvate from D-glyceraldehyde 3-phosphate: step 3/5. In terms of biological role, catalyzes the interconversion of 2-phosphoglycerate and 3-phosphoglycerate. In Ectopseudomonas mendocina (strain ymp) (Pseudomonas mendocina), this protein is 2,3-bisphosphoglycerate-independent phosphoglycerate mutase.